The chain runs to 469 residues: MSTATLYDKVWALHQVAELPSGSTQLFIGLHLIHEVTSPQAFAALKDLGLSVRHPERTVATVDHIVPTTSQARPFADGLAEEMLSTLERNCHENGIHLNGLGSGRQGIVHVMAPELGLTQPGMTVACGDSHTSTHGAFGAIAFGIGTSQVRDVLASQSLTMNKLKVRRIWVDGALQPGVFAKDLVLHIIRTLGVKGGVGYAYEFAGPAIEALSMEERMTLCNMAIEGGARCGYVNPDQTTFDYLKGRPHAPSGDAWDHAVSWWKSLASGADACFDDEVKFDAAVIAPTITWGITPGQGIGVDEAVPTLEQTPEEDRPLAQEAYRYMDLQPGQAIAGLPVDVCFIGSCTNGRLSDLRAAAAVAAGRQVASGIKAFVVPGSEQVAAAAEAEGLDAVFRQAGFEWREPGCSMCLAMNPDRLEGRQISASSSNRNFKGRQGSASGRTLLMSPAMVAAAAIAGRVTDVRSLPPA.

Cys347, Cys407, and Cys410 together coordinate [4Fe-4S] cluster.

It belongs to the aconitase/IPM isomerase family. LeuC type 1 subfamily. As to quaternary structure, heterodimer of LeuC and LeuD. Requires [4Fe-4S] cluster as cofactor.

The catalysed reaction is (2R,3S)-3-isopropylmalate = (2S)-2-isopropylmalate. The protein operates within amino-acid biosynthesis; L-leucine biosynthesis; L-leucine from 3-methyl-2-oxobutanoate: step 2/4. Its function is as follows. Catalyzes the isomerization between 2-isopropylmalate and 3-isopropylmalate, via the formation of 2-isopropylmaleate. The sequence is that of 3-isopropylmalate dehydratase large subunit from Synechococcus sp. (strain RCC307).